Reading from the N-terminus, the 247-residue chain is Homeobox-leucine zipper protein HOX17 (247 aa).

A disordered region spans residues 58–81 (ERAGLRGGGGSDEEDGGCGIDGSR). A DNA-binding region (homeobox) is located at residues 79-138 (GSRKKLRLSKDQSAVLEDSFREHPTLNPRQKATLAQQLGLRPRQVEVWFQNRRARTKLKQ). The interval 137 to 182 (KQTEVDCEFLKRCCETLTEENRRLQKEVQELRALKLVSPHLYMNMS) is leucine-zipper.

Belongs to the HD-ZIP homeobox family. Class II subfamily. As to expression, expressed in seedlings, roots, stems, leaf sheaths and blades and panicles.

The protein localises to the nucleus. In terms of biological role, probable transcription factor. The polypeptide is Homeobox-leucine zipper protein HOX17 (HOX17) (Oryza sativa subsp. indica (Rice)).